A 298-amino-acid chain; its full sequence is Mimecan (298 aa).

Positions 1–20 (MKTLQSTLLLLLLVPLIKPA) are cleaved as a signal peptide. The O-linked (GalNAc...) threonine glycan is linked to T80. An N-linked (GlcNAc...) (keratan sulfate) asparagine glycan is attached at N88. 7 LRR repeats span residues 112 to 131 (DAVPPLPKESAYLYARFNKI), 132 to 155 (KKLTAKDFADIPNLRRLDFTGNLI), 156 to 179 (EDIEDGTFSKLSLLEELSLAENQL), 180 to 199 (LKLPVLPPKLTLFNAKYNKI), 200 to 225 (KSRGIKANAFKKLNNLTFLYLDHNAL), 226 to 246 (ESVPLNLPESLRVIHLQFNNI), and 247 to 277 (ASITDDTFCKANDTSYIRDRIEEIRLEGNPI). N214 carries N-linked (GlcNAc...) (keratan sulfate) asparagine glycosylation. C255 and C288 are oxidised to a cystine. N-linked (GlcNAc...) (keratan sulfate) asparagine glycosylation is present at N258.

It belongs to the small leucine-rich proteoglycan (SLRP) family. SLRP class III subfamily. Post-translationally, O-glycosylated with a core 1 or possibly core 8 glycan. Contains keratan sulfate. As to expression, bone.

The protein resides in the secreted. Its subcellular location is the extracellular space. The protein localises to the extracellular matrix. Functionally, induces bone formation in conjunction with TGF-beta-1 or TGF-beta-2. This Homo sapiens (Human) protein is Mimecan (OGN).